Consider the following 1366-residue polypeptide: Serine/threonine-protein kinase RUNKEL (1366 aa).

ATP contacts are provided by residues 10–18 (IGHGKCSTV) and lysine 33. Residue aspartate 121 is the Proton acceptor of the active site. 4 disordered regions span residues 276-356 (TKPC…VNIL), 367-386 (QKENEKENYRRPLPNSNENC), 398-502 (LDFD…DSSK), and 524-549 (PSRKSDKEAVHSLSFETPQPSDFSKK). Over residues 283 to 302 (RNGDRPNKTPPKYREKDRKG) the composition is skewed to basic and acidic residues. Polar residues predominate over residues 304–313 (SKQNENSIQG). Residues 367 to 376 (QKENEKENYR) are compositionally biased toward basic and acidic residues. Acidic residues predominate over residues 398 to 414 (LDFDENNDDEGPDESEG). Positions 422-433 (QEERVMSHNENH) are enriched in basic and acidic residues. Polar residues predominate over residues 438 to 454 (VVSSNVPDENSSANETP). HEAT repeat units follow at residues 595-633 (LTNGPIMLVLVKVLRLSKTPAFRVQIASLIGLLIRHSTS), 638-675 (LANSGILDSLTNGLRDKHEKVRRFSMAALGELLFYIST), 699-737 (QVSNALISLVSSVLRKGEDDLTQVYALRTIENICSQGAY), 835-872 (TEEKNLFPSLLSIIEQGTEVLRGKALLFVAFLCKNSRR), 878-907 (FCNARFLPVVDRLAKEKDSYLQQCLEAFVN), 908-945 (VIASIIPGMLDTITNDIQQLMTGRRHGPVSPLNSRAPV), 946-986 (KTNA…LVEA), 992-1018 (DDFRVTLLQVLECITGDAPLVTQNGEI), 1019-1057 (IIREILPSLAAIYNGNKDGDARFLCLKIWFDSLTILLTE), 1072-1111 (ISNSHFLPLYPALIQDEDPIPAYAQKLLVMLVEFDYIKIS), 1279-1316 (TNLPKITPILDSWRRRKSTELHLLVLKRVLHCLGYACK), and 1329-1366 (GHDVSKINAIVSEMKNSDAAGLNSIASLVAMELQRLPR).

This sequence belongs to the protein kinase superfamily. Ser/Thr protein kinase family. Binds to microtubules (MT). In terms of tissue distribution, expressed in proliferating tissues of seedlings, lateral roots, young rosette leaves, siliques, flowers, embryos and stems (including apical meristem).

The protein resides in the cytoplasm. It localises to the cytoskeleton. It is found in the phragmoplast. The protein localises to the spindle. It carries out the reaction L-seryl-[protein] + ATP = O-phospho-L-seryl-[protein] + ADP + H(+). The catalysed reaction is L-threonyl-[protein] + ATP = O-phospho-L-threonyl-[protein] + ADP + H(+). Functionally, essential protein that regulates phragmoplast microtubule organization during cell plate expansion in cytokinesis during cell division, both somatic and syncytial. Required for endosperm cellularisation. In pollen development, involved in cellularisation during microsporogenesis by regulating radial microtubules (MT) organization in microspore mother cells. Seems to not have kinase activity. This chain is Serine/threonine-protein kinase RUNKEL, found in Arabidopsis thaliana (Mouse-ear cress).